A 425-amino-acid chain; its full sequence is Dihydroorotase (425 aa).

Zn(2+)-binding residues include H61 and H63. Substrate contacts are provided by residues 63-65 and N95; that span reads HLR. 3 residues coordinate Zn(2+): D153, H180, and H233. N279 contacts substrate. D306 serves as a coordination point for Zn(2+). The active site involves D306. Residue H310 participates in substrate binding.

The protein belongs to the metallo-dependent hydrolases superfamily. DHOase family. Class I DHOase subfamily. The cofactor is Zn(2+).

The catalysed reaction is (S)-dihydroorotate + H2O = N-carbamoyl-L-aspartate + H(+). It participates in pyrimidine metabolism; UMP biosynthesis via de novo pathway; (S)-dihydroorotate from bicarbonate: step 3/3. In terms of biological role, catalyzes the reversible cyclization of carbamoyl aspartate to dihydroorotate. This chain is Dihydroorotase, found in Trichlorobacter lovleyi (strain ATCC BAA-1151 / DSM 17278 / SZ) (Geobacter lovleyi).